The chain runs to 447 residues: Asparagine--tRNA ligase (447 aa).

This sequence belongs to the class-II aminoacyl-tRNA synthetase family. In terms of assembly, homodimer.

It localises to the cytoplasm. The catalysed reaction is tRNA(Asn) + L-asparagine + ATP = L-asparaginyl-tRNA(Asn) + AMP + diphosphate + H(+). The chain is Asparagine--tRNA ligase from Mycoplasma mobile (strain ATCC 43663 / 163K / NCTC 11711) (Mesomycoplasma mobile).